Consider the following 142-residue polypeptide: Translation initiation factor 2 subunit beta (142 aa).

The protein belongs to the eIF-2-beta/eIF-5 family. As to quaternary structure, heterotrimer composed of an alpha, a beta and a gamma chain.

Functionally, eIF-2 functions in the early steps of protein synthesis by forming a ternary complex with GTP and initiator tRNA. This is Translation initiation factor 2 subunit beta from Thermococcus gammatolerans (strain DSM 15229 / JCM 11827 / EJ3).